The following is a 218-amino-acid chain: Peptide deformylase (218 aa).

Fe cation contacts are provided by Cys130 and His172. The active site involves Glu173. Position 176 (His176) interacts with Fe cation.

The protein belongs to the polypeptide deformylase family. Fe(2+) is required as a cofactor.

It catalyses the reaction N-terminal N-formyl-L-methionyl-[peptide] + H2O = N-terminal L-methionyl-[peptide] + formate. Removes the formyl group from the N-terminal Met of newly synthesized proteins. Requires at least a dipeptide for an efficient rate of reaction. N-terminal L-methionine is a prerequisite for activity but the enzyme has broad specificity at other positions. In Bifidobacterium adolescentis (strain ATCC 15703 / DSM 20083 / NCTC 11814 / E194a), this protein is Peptide deformylase.